The sequence spans 134 residues: Transcription antitermination protein NusB (134 aa).

It belongs to the NusB family.

Its function is as follows. Involved in transcription antitermination. Required for transcription of ribosomal RNA (rRNA) genes. Binds specifically to the boxA antiterminator sequence of the ribosomal RNA (rrn) operons. The polypeptide is Transcription antitermination protein NusB (Shewanella amazonensis (strain ATCC BAA-1098 / SB2B)).